A 565-amino-acid chain; its full sequence is Liver carboxylesterase 1 (565 aa).

The first 18 residues, 1–18 (MWLCALALASLAACTAWG), serve as a signal peptide directing secretion. N-linked (GlcNAc...) asparagine glycosylation is present at Asn-79. Residues Cys-87 and Cys-116 are joined by a disulfide bond. Catalysis depends on Ser-221, which acts as the Acyl-ester intermediate. Cysteines 273 and 284 form a disulfide. Glu-353 (charge relay system) is an active-site residue. Asn-389 carries an N-linked (GlcNAc...) asparagine glycan. Residue His-467 is the Charge relay system of the active site. A short sequence motif (prevents secretion from ER) is located at residue Leu-565.

The protein belongs to the type-B carboxylesterase/lipase family. In terms of assembly, monomer.

It is found in the endoplasmic reticulum lumen. The enzyme catalyses a carboxylic ester + H2O = an alcohol + a carboxylate + H(+). Functionally, involved in the detoxification of xenobiotics and in the activation of ester and amide prodrugs. In Oryctolagus cuniculus (Rabbit), this protein is Liver carboxylesterase 1.